A 228-amino-acid polypeptide reads, in one-letter code: Cytochrome c oxidase subunit 2 (228 aa).

Residues 1-26 (MATWANLGLQDSSSPLMEQLNFFHDH) are Mitochondrial intermembrane-facing. Residues 27–48 (TLLILTMITILVGYIMGMLSFN) form a helical membrane-spanning segment. The Mitochondrial matrix portion of the chain corresponds to 49 to 62 (KFTNRFLLHGQTIE). Residues 63–82 (IIWTVLPAIILMFIAFPSLR) traverse the membrane as a helical segment. The Mitochondrial intermembrane portion of the chain corresponds to 83 to 228 (LLYLMDEINT…FIKWITSMTN (146 aa)). 6 residues coordinate Cu cation: histidine 161, cysteine 196, glutamate 198, cysteine 200, histidine 204, and methionine 207. Glutamate 198 lines the Mg(2+) pocket.

This sequence belongs to the cytochrome c oxidase subunit 2 family. In terms of assembly, component of the cytochrome c oxidase (complex IV, CIV), a multisubunit enzyme composed of a catalytic core of 3 subunits and several supernumerary subunits. The complex exists as a monomer or a dimer and forms supercomplexes (SCs) in the inner mitochondrial membrane with ubiquinol-cytochrome c oxidoreductase (cytochrome b-c1 complex, complex III, CIII). Requires Cu cation as cofactor.

It is found in the mitochondrion inner membrane. It catalyses the reaction 4 Fe(II)-[cytochrome c] + O2 + 8 H(+)(in) = 4 Fe(III)-[cytochrome c] + 2 H2O + 4 H(+)(out). Functionally, component of the cytochrome c oxidase, the last enzyme in the mitochondrial electron transport chain which drives oxidative phosphorylation. The respiratory chain contains 3 multisubunit complexes succinate dehydrogenase (complex II, CII), ubiquinol-cytochrome c oxidoreductase (cytochrome b-c1 complex, complex III, CIII) and cytochrome c oxidase (complex IV, CIV), that cooperate to transfer electrons derived from NADH and succinate to molecular oxygen, creating an electrochemical gradient over the inner membrane that drives transmembrane transport and the ATP synthase. Cytochrome c oxidase is the component of the respiratory chain that catalyzes the reduction of oxygen to water. Electrons originating from reduced cytochrome c in the intermembrane space (IMS) are transferred via the dinuclear copper A center (CU(A)) of subunit 2 and heme A of subunit 1 to the active site in subunit 1, a binuclear center (BNC) formed by heme A3 and copper B (CU(B)). The BNC reduces molecular oxygen to 2 water molecules using 4 electrons from cytochrome c in the IMS and 4 protons from the mitochondrial matrix. The polypeptide is Cytochrome c oxidase subunit 2 (COII) (Anopheles gambiae (African malaria mosquito)).